We begin with the raw amino-acid sequence, 59 residues long: MIDEALLKLLVCPKSKAPLKQVGNELICEVSGLAYPIEDGIPILLVEEARELDKGSDKK.

The protein belongs to the UPF0434 family.

This chain is UPF0434 protein COSY_0767, found in Vesicomyosocius okutanii subsp. Calyptogena okutanii (strain HA).